Consider the following 324-residue polypeptide: Probable pectinesterase A (324 aa).

Positions 1–19 are cleaved as a signal peptide; the sequence is MHGSLLKLALLSFSLASSA. Substrate is bound at residue Gln142. Asp165 serves as the catalytic Proton donor. The Nucleophile role is filled by Asp186. Positions 246 and 248 each coordinate substrate. N-linked (GlcNAc...) asparagine glycosylation occurs at Asn285.

Belongs to the pectinesterase family.

The protein localises to the secreted. The catalysed reaction is [(1-&gt;4)-alpha-D-galacturonosyl methyl ester](n) + n H2O = [(1-&gt;4)-alpha-D-galacturonosyl](n) + n methanol + n H(+). The protein operates within glycan metabolism; pectin degradation; 2-dehydro-3-deoxy-D-gluconate from pectin: step 1/5. Its function is as follows. Involved in maceration and soft-rotting of plant tissue. The chain is Probable pectinesterase A (pmeA) from Aspergillus flavus (strain ATCC 200026 / FGSC A1120 / IAM 13836 / NRRL 3357 / JCM 12722 / SRRC 167).